The primary structure comprises 358 residues: Alanine racemase (358 aa).

The active-site Proton acceptor; specific for D-alanine is lysine 35. The residue at position 35 (lysine 35) is an N6-(pyridoxal phosphate)lysine. Substrate is bound at residue arginine 130. Tyrosine 255 serves as the catalytic Proton acceptor; specific for L-alanine. Methionine 303 contacts substrate.

It belongs to the alanine racemase family. The cofactor is pyridoxal 5'-phosphate.

It catalyses the reaction L-alanine = D-alanine. It functions in the pathway amino-acid biosynthesis; D-alanine biosynthesis; D-alanine from L-alanine: step 1/1. Functionally, catalyzes the interconversion of L-alanine and D-alanine. May also act on other amino acids. This chain is Alanine racemase (alr), found in Shewanella baltica (strain OS223).